The sequence spans 615 residues: Zinc finger protein 653 (615 aa).

Disordered stretches follow at residues 1–48, 95–117, 176–236, and 401–432; these read MAER…ARRR, RSGR…KRRR, PLSD…SSGL, and EEKE…ELDG. The short motif at 107–118 is the Nuclear localization signal element; the sequence is PKKPKRKKRRRR. Residues 108–117 show a composition bias toward basic residues; sequence KKPKRKKRRR. Over residues 193-205 the composition is skewed to low complexity; it reads AGSSDSSSSGSAS. Polar residues predominate over residues 226-236; sequence TPTSPVGSSGL. Positions 419-432 are enriched in acidic residues; it reads AEPEAEADGEELDG. Positions 445–451 match the Nuclear localization signal motif; that stretch reads EPEKRRR. 5 consecutive C2H2-type zinc fingers follow at residues 467 to 492, 498 to 522, 528 to 550, 556 to 578, and 586 to 609; these read FHCP…NLVH, KVCP…MIIH, FTCE…RRTH, LQCE…MKKH, and FTCD…LKSH.

The protein belongs to the krueppel C2H2-type zinc-finger protein family. As to quaternary structure, interacts with NR5A1. In terms of tissue distribution, highly expressed in testis, cerebellum, temporal lobe, hippocampus and the adrenal gland. Moderately expressed in spleen, uterus, thymus, pancreas, kidney, stomach and rectum.

It localises to the nucleus. Transcriptional repressor. May repress NR5A1, PPARG, NR1H3, NR4A2, ESR1 and NR3C1 transcriptional activity. The chain is Zinc finger protein 653 (ZNF653) from Homo sapiens (Human).